We begin with the raw amino-acid sequence, 377 residues long: Transmembrane protein 237A (377 aa).

Composition is skewed to basic and acidic residues over residues 1–11, 43–64, and 74–87; these read MCVTSRADKMP, LESRRQSESREPLTPEPHDNPP, and HTFENEGEQQDHPN. The tract at residues 1-124 is disordered; the sequence is MCVTSRADKM…NQSHNELGVE (124 aa). A run of 4 helical transmembrane segments spans residues 198–218, 239–259, 273–293, and 326–346; these read IIGLFSHGFLAGYAVWNIIVV, LAYPAQSLLYLLLAISTVSAF, GFLTLDPAALASFLYFAALIL, and PWIVVNLVVALLVGLAWVFVA.

It belongs to the TMEM237 family.

The protein resides in the membrane. It localises to the cell projection. It is found in the cilium. Functionally, component of the transition zone in primary cilia. Required for ciliogenesis. The chain is Transmembrane protein 237A (tmem237a) from Danio rerio (Zebrafish).